The following is a 437-amino-acid chain: Trigger factor (437 aa).

In terms of domain architecture, PPIase FKBP-type spans 163–248; that stretch reads GDRVIIDFEG…LNNVSEATLP (86 aa).

It belongs to the FKBP-type PPIase family. Tig subfamily.

Its subcellular location is the cytoplasm. The enzyme catalyses [protein]-peptidylproline (omega=180) = [protein]-peptidylproline (omega=0). Involved in protein export. Acts as a chaperone by maintaining the newly synthesized protein in an open conformation. Functions as a peptidyl-prolyl cis-trans isomerase. This chain is Trigger factor (tig), found in Neisseria meningitidis serogroup B (strain ATCC BAA-335 / MC58).